The chain runs to 1912 residues: Receptor-type tyrosine-protein phosphatase delta (1912 aa).

Residues 1 to 20 (MVPVARPLSLLLTFFLCACA) form the signal peptide. The Extracellular portion of the chain corresponds to 21–1266 (ETPPRFTRTP…PQPITDEEEG (1246 aa)). Ig-like C2-type domains lie at 24–114 (PRFT…TRLT) and 126–224 (PTID…ANLY). 2 disulfides stabilise this stretch: Cys-45–Cys-98 and Cys-147–Cys-207. The segment at 181–189 (ESIGGTPIR) is mini-exon peptide A9; sufficient for interaction with IL1RAPL1. Positions 227 to 230 (ELRE) are mini-exon peptide B; required for interaction with SLITRK2 and in the function in pre-synaptic differentiation; Acts as an adjustable linker to control relative positions and orientations of the PTPRD second and third immunoglobilin domains for their simultaneous interactions with the first immunoglobilin domain of IL1RAPL1 and IL1RAP; Modulates affinity for IL1RAPL1 and IL1RAP. The 83-residue stretch at 236–318 (PRFSIPPTNH…GVIEAIAQIT (83 aa)) folds into the Ig-like C2-type 3 domain. 2 N-linked (GlcNAc...) asparagine glycosylation sites follow: Asn-254 and Asn-299. Cysteines 257 and 302 form a disulfide. Fibronectin type-III domains follow at residues 325–415 (PPGT…TSEQ), 420–516 (APRD…TGVP), 518–607 (QPLN…TMQS), 612–709 (PPQD…TDED), 714–822 (PPRK…TTGA), 823–916 (VPGK…VPEE), 921–1016 (FPQN…TLPV), and 1020–1106 (FAKN…TAPD). Residues Asn-724 and Asn-832 are each glycosylated (N-linked (GlcNAc...) asparagine). Residues 1267-1287 (LIWVVGPVLAVVFIICIVIAI) form a helical membrane-spanning segment. At 1288–1912 (LLYKRKRAES…YLGSFDHYAT (625 aa)) the chain is on the cytoplasmic side. The segment at 1298–1319 (ESRKSSLPNSKEVPSHHPTDPV) is disordered. Residues 1310–1319 (VPSHHPTDPV) show a composition bias toward basic and acidic residues. 2 Tyrosine-protein phosphatase domains span residues 1357–1612 (FSQE…LLEA) and 1644–1903 (MELE…ALEY). Substrate-binding positions include Asp-1521, 1553–1559 (CSAGVGR), and Gln-1597. Cys-1553 (phosphocysteine intermediate) is an active-site residue. The Phosphocysteine intermediate role is filled by Cys-1844.

The protein belongs to the protein-tyrosine phosphatase family. Receptor class 2A subfamily. In terms of assembly, interacts with PPFIA1, PPFIA2 and PPFIA3. Interacts (via extracellular domain) with SLITRK4 (via LRR 1 and 2 repeats). Interacts with SLITRK2; induces presynaptic differentiation. Interacts (via the second immunoglobilin domain) with IL1RAPL1 (via the first immunoglobilin domain); induces pre- and postsynaptic differentiation of neurons and synapse formation. Isoform G, isoform H, isoform I, isoform J, and isoform K do not interact with IL1RAPL1. Interacts (via the third immunoglobilin domain) with IL1RAP (via the first immunoglobilin domain); induces pre- and postsynaptic differentiation of neurons. Post-translationally, a cleavage occurs, separating the extracellular domain from the transmembrane segment. This process called 'ectodomain shedding' is thought to be involved in receptor desensitization, signal transduction and/or membrane localization. In terms of tissue distribution, brain, kidney, heart, and some B-cell lines.

The protein localises to the membrane. The catalysed reaction is O-phospho-L-tyrosyl-[protein] + H2O = L-tyrosyl-[protein] + phosphate. Functionally, can bidirectionally induce pre- and post-synaptic differentiation of neurons by mediating interaction with IL1RAP and IL1RAPL1 trans-synaptically. Involved in pre-synaptic differentiation through interaction with SLITRK2. This Mus musculus (Mouse) protein is Receptor-type tyrosine-protein phosphatase delta (Ptprd).